A 311-amino-acid chain; its full sequence is Oxidoreductase NAD-binding domain-containing protein 1 (311 aa).

An N-terminal signal peptide occupies residues 1-17 (MACAAVMIPGLLRCSVG). The 137-residue stretch at 50 to 186 (HMERTASVLR…GGVGINPLLS (137 aa)) folds into the FAD-binding FR-type domain. Position 178–183 (178–183 (GVGINP)) interacts with NAD(+).

The protein is Oxidoreductase NAD-binding domain-containing protein 1 (OXNAD1) of Pongo abelii (Sumatran orangutan).